The primary structure comprises 431 residues: UDP-N-acetylmuramate--L-alanine ligase (431 aa).

ATP is bound at residue 108 to 114 (GSHGKTS).

It belongs to the MurCDEF family.

The protein resides in the cytoplasm. It catalyses the reaction UDP-N-acetyl-alpha-D-muramate + L-alanine + ATP = UDP-N-acetyl-alpha-D-muramoyl-L-alanine + ADP + phosphate + H(+). The protein operates within cell wall biogenesis; peptidoglycan biosynthesis. Functionally, cell wall formation. The chain is UDP-N-acetylmuramate--L-alanine ligase from Exiguobacterium sibiricum (strain DSM 17290 / CCUG 55495 / CIP 109462 / JCM 13490 / 255-15).